Consider the following 486-residue polypeptide: Glutamate--tRNA ligase 1 (486 aa).

The 'HIGH' region motif lies at 9–19; sequence PSPTGMLHIGG. The 'KMSKS' region motif lies at 259 to 263; that stretch reads KLSKR. Lysine 262 lines the ATP pocket.

It belongs to the class-I aminoacyl-tRNA synthetase family. Glutamate--tRNA ligase type 1 subfamily. Monomer.

The protein resides in the cytoplasm. The catalysed reaction is tRNA(Glu) + L-glutamate + ATP = L-glutamyl-tRNA(Glu) + AMP + diphosphate. Its function is as follows. Catalyzes the attachment of glutamate to tRNA(Glu) in a two-step reaction: glutamate is first activated by ATP to form Glu-AMP and then transferred to the acceptor end of tRNA(Glu). The polypeptide is Glutamate--tRNA ligase 1 (Hyphomonas neptunium (strain ATCC 15444)).